The following is a 117-amino-acid chain: Urease subunit beta (117 aa).

The tract at residues 95–117 (NAVNGKLDGGPHPGVPATERGAK) is disordered.

Belongs to the urease beta subunit family. As to quaternary structure, heterotrimer of UreA (gamma), UreB (beta) and UreC (alpha) subunits. Three heterotrimers associate to form the active enzyme.

Its subcellular location is the cytoplasm. It carries out the reaction urea + 2 H2O + H(+) = hydrogencarbonate + 2 NH4(+). Its pathway is nitrogen metabolism; urea degradation; CO(2) and NH(3) from urea (urease route): step 1/1. The polypeptide is Urease subunit beta (Pseudarthrobacter chlorophenolicus (strain ATCC 700700 / DSM 12829 / CIP 107037 / JCM 12360 / KCTC 9906 / NCIMB 13794 / A6) (Arthrobacter chlorophenolicus)).